Here is a 149-residue protein sequence, read N- to C-terminus: 3-dehydroquinate dehydratase (149 aa).

Residue Tyr25 is the Proton acceptor of the active site. Residues Asn76, His82, and Asp89 each coordinate substrate. His102 serves as the catalytic Proton donor. Substrate contacts are provided by residues 103 to 104 (LS) and Arg113.

The protein belongs to the type-II 3-dehydroquinase family. As to quaternary structure, homododecamer.

It catalyses the reaction 3-dehydroquinate = 3-dehydroshikimate + H2O. It participates in metabolic intermediate biosynthesis; chorismate biosynthesis; chorismate from D-erythrose 4-phosphate and phosphoenolpyruvate: step 3/7. Functionally, catalyzes a trans-dehydration via an enolate intermediate. The chain is 3-dehydroquinate dehydratase from Acaryochloris marina (strain MBIC 11017).